The following is an 839-amino-acid chain: DNA gyrase subunit A (839 aa).

The Topo IIA-type catalytic domain occupies 46–510 (LPDARDGLKP…ISEDIDDEDL (465 aa)). Tyr-134 functions as the O-(5'-phospho-DNA)-tyrosine intermediate in the catalytic mechanism. A GyrA-box motif is present at residues 537 to 543 (QHRGGVG).

Belongs to the type II topoisomerase GyrA/ParC subunit family. As to quaternary structure, heterotetramer, composed of two GyrA and two GyrB chains. In the heterotetramer, GyrA contains the active site tyrosine that forms a transient covalent intermediate with DNA, while GyrB binds cofactors and catalyzes ATP hydrolysis.

It localises to the cytoplasm. The enzyme catalyses ATP-dependent breakage, passage and rejoining of double-stranded DNA.. Functionally, a type II topoisomerase that negatively supercoils closed circular double-stranded (ds) DNA in an ATP-dependent manner to modulate DNA topology and maintain chromosomes in an underwound state. Negative supercoiling favors strand separation, and DNA replication, transcription, recombination and repair, all of which involve strand separation. Also able to catalyze the interconversion of other topological isomers of dsDNA rings, including catenanes and knotted rings. Type II topoisomerases break and join 2 DNA strands simultaneously in an ATP-dependent manner. The polypeptide is DNA gyrase subunit A (Mycoplasma pneumoniae (strain ATCC 29342 / M129 / Subtype 1) (Mycoplasmoides pneumoniae)).